We begin with the raw amino-acid sequence, 156 residues long: Small ribosomal subunit protein uS7 (156 aa).

It belongs to the universal ribosomal protein uS7 family. Part of the 30S ribosomal subunit. Contacts proteins S9 and S11.

In terms of biological role, one of the primary rRNA binding proteins, it binds directly to 16S rRNA where it nucleates assembly of the head domain of the 30S subunit. Is located at the subunit interface close to the decoding center, probably blocks exit of the E-site tRNA. The polypeptide is Small ribosomal subunit protein uS7 (Shewanella sp. (strain ANA-3)).